Consider the following 729-residue polypeptide: DNA topoisomerase 3 (729 aa).

Positions 3 to 136 constitute a Toprim domain; it reads KSVVIAEKPS…IKRLWISSVT (134 aa). 2 residues coordinate Mg(2+): E9 and D105. The region spanning 153–594 is the Topo IA-type catalytic domain; it reads YDNLYASAVA…EMKNYTKEIV (442 aa). Positions 187 to 192 are interaction with DNA; that stretch reads NCGRVQ. Y310 serves as the catalytic O-(5'-phospho-DNA)-tyrosine intermediate. Residues 686–713 are compositionally biased toward basic and acidic residues; it reads ERRKKESGNKADKRDVQKYMKQQKKEEE. A disordered region spans residues 686–718; the sequence is ERRKKESGNKADKRDVQKYMKQQKKEEEPLNNP.

This sequence belongs to the type IA topoisomerase family. It depends on Mg(2+) as a cofactor.

It carries out the reaction ATP-independent breakage of single-stranded DNA, followed by passage and rejoining.. Releases the supercoiling and torsional tension of DNA, which is introduced during the DNA replication and transcription, by transiently cleaving and rejoining one strand of the DNA duplex. Introduces a single-strand break via transesterification at a target site in duplex DNA. The scissile phosphodiester is attacked by the catalytic tyrosine of the enzyme, resulting in the formation of a DNA-(5'-phosphotyrosyl)-enzyme intermediate and the expulsion of a 3'-OH DNA strand. The free DNA strand then undergoes passage around the unbroken strand, thus removing DNA supercoils. Finally, in the religation step, the DNA 3'-OH attacks the covalent intermediate to expel the active-site tyrosine and restore the DNA phosphodiester backbone. The protein is DNA topoisomerase 3 of Bacillus cereus (strain ZK / E33L).